We begin with the raw amino-acid sequence, 83 residues long: Putative defensin-like protein 257 (83 aa).

Residues 1-25 (MMNVSLKLSFLVFILVIMSNLGSEA) form the signal peptide. Disulfide bonds link Cys-57–Cys-73, Cys-63–Cys-80, and Cys-67–Cys-82.

This sequence belongs to the DEFL family.

The protein resides in the secreted. This chain is Putative defensin-like protein 257, found in Arabidopsis thaliana (Mouse-ear cress).